The sequence spans 365 residues: tRNA-specific 2-thiouridylase MnmA (365 aa).

Residues 14 to 21 and leucine 40 each bind ATP; that span reads AMSGGVDS. Cysteine 108 functions as the Nucleophile in the catalytic mechanism. Cysteines 108 and 204 form a disulfide. Residue glycine 132 coordinates ATP. The interaction with tRNA stretch occupies residues 154–156; the sequence is KDQ. Cysteine 204 functions as the Cysteine persulfide intermediate in the catalytic mechanism.

The protein belongs to the MnmA/TRMU family.

The protein resides in the cytoplasm. The catalysed reaction is S-sulfanyl-L-cysteinyl-[protein] + uridine(34) in tRNA + AH2 + ATP = 2-thiouridine(34) in tRNA + L-cysteinyl-[protein] + A + AMP + diphosphate + H(+). Functionally, catalyzes the 2-thiolation of uridine at the wobble position (U34) of tRNA, leading to the formation of s(2)U34. The chain is tRNA-specific 2-thiouridylase MnmA from Rickettsia rickettsii (strain Iowa).